A 48-amino-acid chain; its full sequence is Small, acid-soluble spore protein P (48 aa).

Positions 1-12 (MTNKNTSKDMHK) are enriched in basic and acidic residues. A disordered region spans residues 1–48 (MTNKNTSKDMHKNAPKGHNPGQPEPLSGSKKVKNRNHTRQKHNTSHDM). Residues 30 to 48 (KKVKNRNHTRQKHNTSHDM) are compositionally biased toward basic residues.

Belongs to the SspP family.

Its subcellular location is the spore core. This chain is Small, acid-soluble spore protein P, found in Bacillus velezensis (strain DSM 23117 / BGSC 10A6 / LMG 26770 / FZB42) (Bacillus amyloliquefaciens subsp. plantarum).